Here is a 393-residue protein sequence, read N- to C-terminus: Arrestin-C (393 aa).

Basic and acidic residues predominate over residues 371 to 386 (FARQEDGGEEKQKALA). The segment at 371–393 (FARQEDGGEEKQKALAEEGDEGS) is disordered.

This sequence belongs to the arrestin family. As to quaternary structure, homodimer; disulfide-linked in response to retinal illumination. Interacts with CXCR4; the interaction is dependent on the C-terminal phosphorylation of CXCR4 and modulates the calcium ion mobilization activity of CXCR4.

It localises to the photoreceptor inner segment. Its subcellular location is the cell projection. The protein resides in the cilium. The protein localises to the photoreceptor outer segment. May play a role in an as yet undefined retina-specific signal transduction. Could bind to photoactivated-phosphorylated red/green opsins. The protein is Arrestin-C (ARR3) of Ictidomys tridecemlineatus (Thirteen-lined ground squirrel).